We begin with the raw amino-acid sequence, 388 residues long: Oxytocin receptor (388 aa).

The interval 1–32 (MEGTPAANWSVELDLGSGVPPGEEGNRTAGPP) is disordered. At 1–38 (MEGTPAANWSVELDLGSGVPPGEEGNRTAGPPQRNEAL) the chain is on the extracellular side. Residues Asn8 and Asn26 are each glycosylated (N-linked (GlcNAc...) asparagine). A helical membrane pass occupies residues 39 to 63 (ARVEVAVLCLILFLALSGNACVLLA). At 64–74 (LRTTRHKHSRL) the chain is on the cytoplasmic side. Residues 75 to 97 (FFFMKHLSIADLVVAVFQVLPQL) form a helical membrane-spanning segment. Residues 98 to 113 (LWDITFRFYGPDLLCR) are Extracellular-facing. Cys112 and Cys187 are joined by a disulfide. A helical transmembrane segment spans residues 114 to 135 (LVKYLQVVGMFASTYLLLLMSL). Topologically, residues 136–154 (DRCLAICQPLRSLRRRTDR) are cytoplasmic. The chain crosses the membrane as a helical span at residues 155 to 175 (LAVLGTWLGCLVASAPQVHIF). Residues 176 to 202 (SLREVADGVFDCWAVFIQPWGPKAYVT) lie on the Extracellular side of the membrane. A helical membrane pass occupies residues 203-225 (WITLAVYIVPVIVLAACYGLISF). The Cytoplasmic portion of the chain corresponds to 226–274 (KIWQNLRLKTAAAAAAAEGNDAAGGAGRAALARVSSVKLISKAKIRTVK). Residues 275-293 (MTFIIVLAFIVCWTPFFFV) traverse the membrane as a helical segment. Topologically, residues 294–308 (QMWSVWDVNAPKEAS) are extracellular. Residues 309-331 (AFIIAMLLASLNSCCNPWIYMLF) form a helical membrane-spanning segment. The Cytoplasmic portion of the chain corresponds to 332–388 (TGHLFHELVQRFFCCSARYLKGSRPGETSVSKKSNSSTFVLSRRSSSQRSCSQPSSA). Positions 354 to 388 (SRPGETSVSKKSNSSTFVLSRRSSSQRSCSQPSSA) are disordered. Ser365 and Ser367 each carry phosphoserine. Over residues 365–388 (SNSSTFVLSRRSSSQRSCSQPSSA) the composition is skewed to low complexity.

This sequence belongs to the G-protein coupled receptor 1 family. Vasopressin/oxytocin receptor subfamily.

The protein resides in the cell membrane. Functionally, receptor for oxytocin. The activity of this receptor is mediated by G proteins which activate a phosphatidylinositol-calcium second messenger system. This chain is Oxytocin receptor (Oxtr), found in Rattus norvegicus (Rat).